A 196-amino-acid chain; its full sequence is ATP-dependent Clp protease proteolytic subunit (196 aa).

Residue S98 is the Nucleophile of the active site. Residue H123 is part of the active site.

It belongs to the peptidase S14 family. In terms of assembly, fourteen ClpP subunits assemble into 2 heptameric rings which stack back to back to give a disk-like structure with a central cavity, resembling the structure of eukaryotic proteasomes.

The protein localises to the cytoplasm. It carries out the reaction Hydrolysis of proteins to small peptides in the presence of ATP and magnesium. alpha-casein is the usual test substrate. In the absence of ATP, only oligopeptides shorter than five residues are hydrolyzed (such as succinyl-Leu-Tyr-|-NHMec, and Leu-Tyr-Leu-|-Tyr-Trp, in which cleavage of the -Tyr-|-Leu- and -Tyr-|-Trp bonds also occurs).. Cleaves peptides in various proteins in a process that requires ATP hydrolysis. Has a chymotrypsin-like activity. Plays a major role in the degradation of misfolded proteins. This chain is ATP-dependent Clp protease proteolytic subunit, found in Actinobacillus pleuropneumoniae serotype 7 (strain AP76).